A 107-amino-acid polypeptide reads, in one-letter code: U1-lycotoxin-Ls1h (107 aa).

Residues 1–20 form the signal peptide; the sequence is MMKVLVVVALLVTLISYSSS. The propeptide occupies 21–41; the sequence is EGIDDLEADELLSLMANEQTR. Intrachain disulfides connect C44–C59, C51–C68, and C70–C84.

Belongs to the neurotoxin 19 (CSTX) family. 04 (U1-Lctx) subfamily. Expressed by the venom gland.

It localises to the secreted. In Lycosa singoriensis (Wolf spider), this protein is U1-lycotoxin-Ls1h.